Consider the following 386-residue polypeptide: Succinate--CoA ligase [ADP-forming] subunit beta (386 aa).

The 236-residue stretch at 9-244 (KAILRSYGVS…LDEEDPKEIE (236 aa)) folds into the ATP-grasp domain. Residues Lys46, 53–55 (GRG), Glu99, Cys102, and Glu107 each bind ATP. 2 residues coordinate Mg(2+): Asn199 and Asp213. Substrate contacts are provided by residues Asn264 and 321-323 (GIM).

It belongs to the succinate/malate CoA ligase beta subunit family. Heterotetramer of two alpha and two beta subunits. Requires Mg(2+) as cofactor.

The catalysed reaction is succinate + ATP + CoA = succinyl-CoA + ADP + phosphate. It catalyses the reaction GTP + succinate + CoA = succinyl-CoA + GDP + phosphate. Its pathway is carbohydrate metabolism; tricarboxylic acid cycle; succinate from succinyl-CoA (ligase route): step 1/1. Its function is as follows. Succinyl-CoA synthetase functions in the citric acid cycle (TCA), coupling the hydrolysis of succinyl-CoA to the synthesis of either ATP or GTP and thus represents the only step of substrate-level phosphorylation in the TCA. The beta subunit provides nucleotide specificity of the enzyme and binds the substrate succinate, while the binding sites for coenzyme A and phosphate are found in the alpha subunit. The sequence is that of Succinate--CoA ligase [ADP-forming] subunit beta from Bacillus cytotoxicus (strain DSM 22905 / CIP 110041 / 391-98 / NVH 391-98).